Here is a 154-residue protein sequence, read N- to C-terminus: MHIWVDADACPAVIKDILFRAAQRWQIPLTLVANQMLRTPPSALIRAVQVPRGFDVADAHIATHAVAGDLVITADIPLAADVLAKGALALNPRGERYSPDTIRERLSLRDMMEELRASGVDTGGPAAFSQADRKAFANQLDALLARQAAQASRP.

It belongs to the UPF0178 family.

The chain is UPF0178 protein BAV3236 from Bordetella avium (strain 197N).